The chain runs to 424 residues: Hemagglutinin-esterase (424 aa).

Positions methionine 1–serine 16 are cleaved as a signal peptide. The segment at phenylalanine 7 to glycine 127 is esterase domain 1. The Virion surface portion of the chain corresponds to leucine 17–valine 392. Residue serine 40 is the Nucleophile of the active site. A disulfide bridge links cysteine 44 with cysteine 65. N-linked (GlcNAc...) asparagine; by host glycans are attached at residues asparagine 54, asparagine 89, asparagine 114, asparagine 153, asparagine 236, and asparagine 301. 3 disulfide bridges follow: cysteine 113/cysteine 162, cysteine 197/cysteine 276, and cysteine 205/cysteine 249. The interval leucine 128–leucine 266 is receptor binding. Residues leucine 267–asparagine 379 are esterase domain 2. An intrachain disulfide couples cysteine 307 to cysteine 312. Asparagine 316 carries N-linked (GlcNAc...) asparagine; by host glycosylation. Active-site charge relay system residues include aspartate 326 and histidine 329. Cysteine 347 and cysteine 371 are oxidised to a cystine. Residue asparagine 358 is glycosylated (N-linked (GlcNAc...) asparagine; by host). Residues isoleucine 393–phenylalanine 413 traverse the membrane as a helical segment. Residues methionine 414–alanine 424 lie on the Intravirion side of the membrane. A glycan (N-linked (GlcNAc...) asparagine; by host) is linked at asparagine 417.

It belongs to the influenza type C/coronaviruses hemagglutinin-esterase family. In terms of assembly, homodimer; disulfide-linked. Forms a complex with the M protein in the pre-Golgi. Associates then with S-M complex to form a ternary complex S-M-HE. N-glycosylated in the host RER.

The protein resides in the virion membrane. The protein localises to the host cell membrane. The catalysed reaction is N-acetyl-9-O-acetylneuraminate + H2O = N-acetylneuraminate + acetate + H(+). The enzyme catalyses N-acetyl-4-O-acetylneuraminate + H2O = N-acetylneuraminate + acetate + H(+). In terms of biological role, structural protein that makes short spikes at the surface of the virus. Contains receptor binding and receptor-destroying activities. Mediates de-O-acetylation of N-acetyl-4-O-acetylneuraminic acid, which is probably the receptor determinant recognized by the virus on the surface of erythrocytes and susceptible cells. This receptor-destroying activity is important for virus release as it probably helps preventing self-aggregation and ensures the efficient spread of the progeny virus from cell to cell. May serve as a secondary viral attachment protein for initiating infection, the spike protein being the major one. May become a target for both the humoral and the cellular branches of the immune system. The sequence is that of Hemagglutinin-esterase from Homo sapiens (Human).